We begin with the raw amino-acid sequence, 347 residues long: L-Ala-D/L-amino acid epimerase (347 aa).

156–158 contributes to the substrate binding site; that stretch reads KLK. Positions 183, 211, and 237 each coordinate Mg(2+). Substrate is bound by residues lysine 259 and 309–311; that span reads DID.

This sequence belongs to the mandelate racemase/muconate lactonizing enzyme family. Requires Mg(2+) as cofactor.

In terms of biological role, dipeptide epimerase with a broad substrate specificity. Catalyzes the epimerization of L-Ala-L-Ala, L-Ala-L-Ser, L-Ala-L-Thr, L-Ala-L-Met, L-Ala-L-Phe, L-Ala-L-Tyr, L-Gly-L-Asp, L-Val-L-Asp, L-Val-L-Glu and L-Val-L-Phe (in vitro). Can also catalyze the epimerization of L-Ala-L-Glu, but with lower efficiency. The sequence is that of L-Ala-D/L-amino acid epimerase from Pedosphaera parvula (strain Ellin514).